Reading from the N-terminus, the 311-residue chain is MIDNQHKTVLLYEAVDSLNIQNDGIYIDATFGRGGHSSLILSRLGSQGKLISIDRDPEAVKKAKLMKDPRFSFIQGSFSDLYHYVKKLDLMGRINGLLFDLGVSSPQLDDAKRGFSFMRDGPLDMRMDPSRGLSAAEWLMKVNVENLAWVLKNFGEERFSTRLARAIVERNRLNPIKSTKELADLISHVIPVRNHHKHPATRSFQAIRIYINNELQEISSALNAALEILSLGARLSVVSFHSLEDRIVKNFIRQHSRGPQILRGLPLTEIQIQSMWQPKLKLIGKTMPSQKEVLDNPRSRSSILRFAERIN.

S-adenosyl-L-methionine-binding positions include glycine 34 to histidine 36, aspartate 54, phenylalanine 78, aspartate 100, and glutamine 107.

This sequence belongs to the methyltransferase superfamily. RsmH family.

Its subcellular location is the cytoplasm. It carries out the reaction cytidine(1402) in 16S rRNA + S-adenosyl-L-methionine = N(4)-methylcytidine(1402) in 16S rRNA + S-adenosyl-L-homocysteine + H(+). Its function is as follows. Specifically methylates the N4 position of cytidine in position 1402 (C1402) of 16S rRNA. This is Ribosomal RNA small subunit methyltransferase H from Hamiltonella defensa subsp. Acyrthosiphon pisum (strain 5AT).